The chain runs to 446 residues: Chromogranin-A (446 aa).

Residues 1–16 (SAAALALLLCAGQVIA) form the signal peptide. A disulfide bridge connects residues Cys33 and Cys54. The segment at 85–426 (AKERSHQQKK…RPEDQELESL (342 aa)) is disordered. Ser97 is modified (phosphoserine). Basic and acidic residues predominate over residues 105 to 138 (VLEKQNDQAELKEGTEEASSKEAAEKRGDSKEVE). Residues 160–171 (EAEDQTPGEEEA) show a composition bias toward acidic residues. Ser209 is subject to Phosphoserine. The span at 226 to 243 (AGEKAVPEEEGPRSEAFD) shows a compositional bias: basic and acidic residues. The residue at position 286 (Ser286) is a Phosphoserine. Position 304 is a glycine amide (Gly304). Ser319 carries the phosphoserine modification. Positions 319–346 (SEEWENAKRWSKMDRLAKELTAEKRLQG) are enriched in basic and acidic residues. The segment covering 347-357 (EEEEEEEEEDP) has biased composition (acidic residues). Ser360 bears the Phosphoserine mark. Residue Met361 is modified to Methionine sulfoxide. Ser387, Ser391, Ser413, and Ser427 each carry phosphoserine. Basic and acidic residues predominate over residues 403-420 (YLEEKKEEEGSANRRPED). Ser413 carries an O-linked (Xyl...) (chondroitin sulfate) serine glycan.

It belongs to the chromogranin/secretogranin protein family. As to quaternary structure, self-interacts; self-assembly is promoted in vitro by chondroitin sulfate attachment which occurs at mildly acidic pH conditions. Interacts with SCG3. Interacts with ITPR1 in the secretory granules. Post-translationally, O-glycosylated; contains chondroitin sulfate (CS). CS attachment is pH-dependent, being observed at mildly acidic conditions of pH 5 but not at neutral pH, and promotes self-assembly in vitro. In terms of processing, parathyroid CHGA is sulfated on tyrosine residues, whereas adrenal CHGA seems to be mainly sulfated on oligosaccharide residues.

It is found in the secreted. The protein resides in the cytoplasmic vesicle. Its subcellular location is the secretory vesicle. It localises to the neuronal dense core vesicle. Strongly inhibits glucose induced insulin release from the pancreas. In terms of biological role, inhibits low calcium-stimulated parathyroid cell secretion. Its function is as follows. Inhibits catecholamine release from chromaffin cells and noradrenergic neurons by acting as a non-competitive nicotinic cholinergic antagonist. Can induce mast cell migration, degranulation and production of cytokines and chemokines. Functionally, regulates granule biogenesis in endocrine cells by up-regulating the transcription of protease nexin 1 (SERPINE2) via a cAMP-PKA-SP1 pathway. This leads to inhibition of granule protein degradation in the Golgi complex which in turn promotes granule formation. The sequence is that of Chromogranin-A (CHGA) from Sus scrofa (Pig).